A 317-amino-acid polypeptide reads, in one-letter code: USG-1 protein homolog (317 aa).

This sequence belongs to the aspartate-semialdehyde dehydrogenase family.

This chain is USG-1 protein homolog (usg), found in Haemophilus influenzae (strain ATCC 51907 / DSM 11121 / KW20 / Rd).